Consider the following 218-residue polypeptide: Peroxynitrite isomerase 2 (218 aa).

Positions 1–24 (MTPAGDTPERGSGDRAVAEAAERA) are disordered. Positions 7–24 (TPERGSGDRAVAEAAERA) are enriched in basic and acidic residues. Positions 65–71 (GVWRGEG) match the GXWXGXG motif. Heme b is bound by residues K181 and H208.

Belongs to the nitrobindin family. As to quaternary structure, homodimer. Heme b is required as a cofactor.

The catalysed reaction is peroxynitrite = nitrate. The protein operates within nitrogen metabolism. Functionally, heme-binding protein able to scavenge peroxynitrite and to protect free L-tyrosine against peroxynitrite-mediated nitration, by acting as a peroxynitrite isomerase that converts peroxynitrite to nitrate. Therefore, this protein likely plays a role in peroxynitrite sensing and in the detoxification of reactive nitrogen and oxygen species (RNS and ROS, respectively). Is able to bind nitric oxide (NO) in vitro, but may act as a sensor of peroxynitrite levels in vivo. The protein is Peroxynitrite isomerase 2 of Mycolicibacterium smegmatis (strain ATCC 700084 / mc(2)155) (Mycobacterium smegmatis).